The primary structure comprises 192 residues: Xanthine phosphoribosyltransferase (192 aa).

Residues Leu20 and Asn27 each contribute to the xanthine site. 128 to 132 contacts 5-phospho-alpha-D-ribose 1-diphosphate; that stretch reads ANGQA. Lys156 lines the xanthine pocket.

This sequence belongs to the purine/pyrimidine phosphoribosyltransferase family. Xpt subfamily. As to quaternary structure, homodimer.

The protein localises to the cytoplasm. It carries out the reaction XMP + diphosphate = xanthine + 5-phospho-alpha-D-ribose 1-diphosphate. The protein operates within purine metabolism; XMP biosynthesis via salvage pathway; XMP from xanthine: step 1/1. Its function is as follows. Converts the preformed base xanthine, a product of nucleic acid breakdown, to xanthosine 5'-monophosphate (XMP), so it can be reused for RNA or DNA synthesis. The protein is Xanthine phosphoribosyltransferase of Listeria monocytogenes serotype 4b (strain F2365).